Reading from the N-terminus, the 479-residue chain is Dihydrolipoyl dehydrogenase (479 aa).

FAD contacts are provided by residues 41 to 50, Lys59, Ala124, and 153 to 155; these read EKRGALGGTC and TGS. A disulfide bridge connects residues Cys50 and Cys55. Residues 190 to 197, Glu213, Ile247, and Gly284 each bind NAD(+); that span reads GGGVIGLE. FAD contacts are provided by residues Asp325 and 332–335; that span reads MLAH. His458 functions as the Proton acceptor in the catalytic mechanism.

It belongs to the class-I pyridine nucleotide-disulfide oxidoreductase family. In terms of assembly, homodimer. It depends on FAD as a cofactor.

It catalyses the reaction N(6)-[(R)-dihydrolipoyl]-L-lysyl-[protein] + NAD(+) = N(6)-[(R)-lipoyl]-L-lysyl-[protein] + NADH + H(+). The protein is Dihydrolipoyl dehydrogenase of Trypanosoma brucei brucei.